Here is a 464-residue protein sequence, read N- to C-terminus: F-box/FBD/LRR-repeat protein At1g80470 (464 aa).

Positions 15–62 (DWISGLADDLLLQILSKVPTRESVFTSRMSKRWRNLWRHVPALDLDSS) constitute an F-box domain. LRR repeat units lie at residues 96–122 (EEHC…TILS), 123–150 (KVNI…TLYS), 152–178 (VFDA…KFDG), 197–222 (IITH…KLES), 223–249 (MRED…SITD), and 273–298 (DAED…TISA). In terms of domain architecture, FBD spans 359–413 (KEEINLSLVPHCFESSLEYVQLKVPITVSETSSKMELAIYFVRNCSVLKKLMLNE).

This chain is F-box/FBD/LRR-repeat protein At1g80470, found in Arabidopsis thaliana (Mouse-ear cress).